A 132-amino-acid chain; its full sequence is Small ribosomal subunit protein uS8 (132 aa).

It belongs to the universal ribosomal protein uS8 family. As to quaternary structure, part of the 30S ribosomal subunit. Contacts proteins S5 and S12.

One of the primary rRNA binding proteins, it binds directly to 16S rRNA central domain where it helps coordinate assembly of the platform of the 30S subunit. The polypeptide is Small ribosomal subunit protein uS8 (Leifsonia xyli subsp. xyli (strain CTCB07)).